Consider the following 993-residue polypeptide: P3N-PIPO polyprotein (993 aa).

One can recognise a Peptidase S30 domain in the interval 154-298 (GVTPYSVQQL…ESTMLSTHHY (145 aa)). Active-site for P1 proteinase activity residues include His207, Asp216, and Ser249. The short motif at 349–352 (KITC) is the Involved in interaction with stylet and aphid transmission element. The Involved in virions binding and aphid transmission motif lies at 607 to 609 (PTK). In terms of domain architecture, Peptidase C6 spans 633–755 (MYIAKSGYCY…DSEMKHYRVG (123 aa)). Catalysis depends on for helper component proteinase activity residues Cys641 and His714.

Belongs to the potyviridae P3N-PIPO polyprotein family. As to quaternary structure, interacts (via PIPO domain) with host PCaP1 protein; this interaction may help to anchor the movement complex to the plasma membrane from which the complex could move to the plasmodesmata. In terms of processing, potyviral RNA is expressed as two polyproteins which undergo post-translational proteolytic processing. Genome polyprotein is processed by NIa-pro, P1 and HC-pro proteinases resulting in the production of at least ten individual proteins. P3N-PIPO is cleaved by P1 and HC-pro proteinases resulting in the production of three individual proteins. The P1 proteinase and the HC-pro cleave only their respective C-termini autocatalytically.

The protein resides in the host cell junction. Its subcellular location is the host plasmodesma. The catalysed reaction is Hydrolyzes a Gly-|-Gly bond at its own C-terminus, commonly in the sequence -Tyr-Xaa-Val-Gly-|-Gly, in the processing of the potyviral polyprotein.. In terms of biological role, required for aphid transmission and also has proteolytic activity. Only cleaves a Gly-Gly dipeptide at its own C-terminus. Interacts with virions and aphid stylets. Acts as a suppressor of RNA-mediated gene silencing, also known as post-transcriptional gene silencing (PTGS), a mechanism of plant viral defense that limits the accumulation of viral RNAs. May have RNA-binding activity. Functionally, allows efficient cell to cell propagation, by bypassing the host cell wall barrier. Transports viral genome to neighboring plant cells directly through plasmosdesmata, without any budding. This chain is P3N-PIPO polyprotein, found in Solanum betaceum (Tamarillo).